The following is a 558-amino-acid chain: Membrane protein insertase YidC (558 aa).

A run of 5 helical transmembrane segments spans residues 3 to 23 (IKRT…FDNW), 364 to 384 (FVGN…AVFF), 438 to 458 (LPVV…LASV), 477 to 497 (PYFI…KLNP), and 508 to 528 (MMFM…GLVL).

This sequence belongs to the OXA1/ALB3/YidC family. Type 1 subfamily. In terms of assembly, interacts with the Sec translocase complex via SecD. Specifically interacts with transmembrane segments of nascent integral membrane proteins during membrane integration.

Its subcellular location is the cell inner membrane. Its function is as follows. Required for the insertion and/or proper folding and/or complex formation of integral membrane proteins into the membrane. Involved in integration of membrane proteins that insert both dependently and independently of the Sec translocase complex, as well as at least some lipoproteins. Aids folding of multispanning membrane proteins. This chain is Membrane protein insertase YidC, found in Burkholderia pseudomallei (strain K96243).